We begin with the raw amino-acid sequence, 900 residues long: Formin-like protein 5 (900 aa).

A helical; Signal-anchor transmembrane segment spans residues 15–32 (SRLVFWLILFSGLLVITL). Residues 136–209 (RNLATKPGSS…PVSPAKKKED (74 aa)) are disordered. The segment covering 160 to 173 (PPRPPTRPKSPPPR) has biased composition (pro residues). The chain crosses the membrane as a helical span at residues 214–234 (IIIAVVVTAVSTFLLAALFFL). 2 disordered regions span residues 273–440 (SVKG…DAPK) and 849–900 (ARGR…SDSD). Residues 281–304 (HQSFNIYSNQGKMSSFDGSNSDTS) show a composition bias toward polar residues. Basic and acidic residues predominate over residues 307–316 (LEERLSHEGL). The span at 359–368 (FLKVSSKKAS) shows a compositional bias: low complexity. Positions 369-429 (APPPPVPAPQ…GPKAPRPPSG (61 aa)) are enriched in pro residues. Positions 433-865 (ALDDDAPKTK…MARKQGSTAS (433 aa)) constitute an FH2 domain. Residues 860-876 (QGSTASASSETPRQTPS) show a composition bias toward polar residues.

Belongs to the formin-like family. Class-I subfamily. As to expression, expressed in the endosperm. Localizes to the cell plate, a plant-specific membranous component that is assembled at the plane of cell division.

It is found in the membrane. Might be involved in the organization and polarity of the actin cytoskeleton. Interacts with the barbed end of actin filaments and nucleates actin-filament polymerization in vitro. Seems to play a role in cytokinesis. This Arabidopsis thaliana (Mouse-ear cress) protein is Formin-like protein 5 (FH5).